A 349-amino-acid polypeptide reads, in one-letter code: MRTLIVDDSAFMRMAIRSMLASSPDIKIVGDACNGKEAVEKAKSLHPDVVIMDVNMPVMDGLTAVKTIMNTSPVPIIMFSTLTTEGSKEALEALHLGAIDFTAKSESHHDVNKAEKELVDKIRNIHSSNPNLLRLINMRKFKGEVVRGKWRCAGDFGILIGSSTGGPSSLEQVIPRLPGDLPAPVFVVQHMPEGGFCRQMAERLNFLSELEVKEARNNEKVTAGIVYVAPGGYHMTVRKALDVTRIKLIKSQPVHAVMPAVDVTAESMLAVYGKNIVASILTGMGFDGASGFKTIRDAGGSTIACSEDTCVIFGMPKAAIEAGAIDVVKPIFEIPEEIVKRLEAKCNGK.

In terms of domain architecture, Response regulatory spans 2–119; that stretch reads RTLIVDDSAF…DVNKAEKELV (118 aa). Residue Asp53 is modified to 4-aspartylphosphate. The 188-residue stretch at 158–345 folds into the CheB-type methylesterase domain; the sequence is ILIGSSTGGP…EEIVKRLEAK (188 aa). Catalysis depends on residues Ser163, His190, and Asp287.

The protein belongs to the CheB family. Phosphorylated by CheA. Phosphorylation of the N-terminal regulatory domain activates the methylesterase activity.

The protein resides in the cytoplasm. It carries out the reaction [protein]-L-glutamate 5-O-methyl ester + H2O = L-glutamyl-[protein] + methanol + H(+). The catalysed reaction is L-glutaminyl-[protein] + H2O = L-glutamyl-[protein] + NH4(+). Its function is as follows. Involved in chemotaxis. Part of a chemotaxis signal transduction system that modulates chemotaxis in response to various stimuli. Catalyzes the demethylation of specific methylglutamate residues introduced into the chemoreceptors (methyl-accepting chemotaxis proteins or MCP) by CheR. Also mediates the irreversible deamidation of specific glutamine residues to glutamic acid. This chain is Protein-glutamate methylesterase/protein-glutamine glutaminase 1, found in Methanosarcina acetivorans (strain ATCC 35395 / DSM 2834 / JCM 12185 / C2A).